Reading from the N-terminus, the 156-residue chain is RNA polymerase sigma factor SigS (156 aa).

Positions 29 to 44 (EYYQLLLIKMWQLSQI) match the Polymerase core binding motif. Positions 126 to 145 (QFEIAEIMSLSLSTIKLIKM) form a DNA-binding region, H-T-H motif.

It belongs to the sigma-70 factor family.

Sigma factors are initiation factors that promote the attachment of RNA polymerase to specific initiation sites and are then released. Sigma-S contributes to the protection against external stress, thus playing a role in cellular fitness and survival. This chain is RNA polymerase sigma factor SigS (sigS), found in Staphylococcus aureus (strain COL).